The following is a 371-amino-acid chain: tRNA-specific 2-thiouridylase MnmA (371 aa).

Residues 8 to 15 (GMSGGVDS) and Met34 contribute to the ATP site. The segment at 94–96 (NPD) is interaction with target base in tRNA. Cys99 functions as the Nucleophile in the catalytic mechanism. Residues Cys99 and Cys195 are joined by a disulfide bond. An ATP-binding site is contributed by Gly123. The segment at 145 to 147 (KDQ) is interaction with tRNA. Cys195 acts as the Cysteine persulfide intermediate in catalysis. Positions 309 to 310 (RY) are interaction with tRNA.

The protein belongs to the MnmA/TRMU family.

It is found in the cytoplasm. The enzyme catalyses S-sulfanyl-L-cysteinyl-[protein] + uridine(34) in tRNA + AH2 + ATP = 2-thiouridine(34) in tRNA + L-cysteinyl-[protein] + A + AMP + diphosphate + H(+). In terms of biological role, catalyzes the 2-thiolation of uridine at the wobble position (U34) of tRNA, leading to the formation of s(2)U34. This is tRNA-specific 2-thiouridylase MnmA from Methylococcus capsulatus (strain ATCC 33009 / NCIMB 11132 / Bath).